The primary structure comprises 284 residues: RNase adapter protein RapZ (284 aa).

8-15 (GRSGSGKS) is an ATP binding site. 56 to 59 (DVRN) provides a ligand contact to GTP. The segment at 266-284 (RSRGKNVQSRHRTLEKRKT) is RNA-binding.

The protein belongs to the RapZ-like family. RapZ subfamily. Homotrimer.

Its function is as follows. Modulates the synthesis of GlmS, by affecting the processing and stability of the regulatory small RNA GlmZ. When glucosamine-6-phosphate (GlcN6P) concentrations are high in the cell, RapZ binds GlmZ and targets it to cleavage by RNase E. Consequently, GlmZ is inactivated and unable to activate GlmS synthesis. Under low GlcN6P concentrations, RapZ is sequestered and inactivated by an other regulatory small RNA, GlmY, preventing GlmZ degradation and leading to synthesis of GlmS. The polypeptide is RNase adapter protein RapZ (Salmonella typhi).